Here is a 254-residue protein sequence, read N- to C-terminus: Uridylate kinase (254 aa).

ATP is bound at residue 9–12; it reads KLSG. A UMP-binding site is contributed by glycine 51. ATP contacts are provided by glycine 52 and arginine 56. Residues aspartate 72 and 133-140 contribute to the UMP site; that span reads SGNPFFTT. Positions 160, 166, and 169 each coordinate ATP.

The protein belongs to the UMP kinase family. In terms of assembly, homohexamer.

It localises to the cytoplasm. It carries out the reaction UMP + ATP = UDP + ADP. The protein operates within pyrimidine metabolism; CTP biosynthesis via de novo pathway; UDP from UMP (UMPK route): step 1/1. Its activity is regulated as follows. Inhibited by UTP. Catalyzes the reversible phosphorylation of UMP to UDP. The sequence is that of Uridylate kinase from Synechococcus sp. (strain JA-3-3Ab) (Cyanobacteria bacterium Yellowstone A-Prime).